A 451-amino-acid chain; its full sequence is Chaperone SurA (451 aa).

The signal sequence occupies residues 1–26 (MKKIIPTNLFKLISILFILTPFFAWS). PpiC domains are found at residues 179–280 (DVEY…QLQG) and 290–388 (KQYH…FLDG).

The protein localises to the periplasm. It catalyses the reaction [protein]-peptidylproline (omega=180) = [protein]-peptidylproline (omega=0). Functionally, chaperone involved in the correct folding and assembly of outer membrane proteins. Recognizes specific patterns of aromatic residues and the orientation of their side chains, which are found more frequently in integral outer membrane proteins. May act in both early periplasmic and late outer membrane-associated steps of protein maturation. In Hydrogenovibrio crunogenus (strain DSM 25203 / XCL-2) (Thiomicrospira crunogena), this protein is Chaperone SurA.